A 420-amino-acid chain; its full sequence is Protein translocase subunit SecF (420 aa).

The next 6 helical transmembrane spans lie at Phe-7–Leu-27, Leu-250–Val-270, Trp-276–Phe-296, Ile-309–Phe-327, Val-358–Gly-378, and Val-388–Ile-408.

It belongs to the SecD/SecF family. SecF subfamily. In terms of assembly, forms a complex with SecD. Part of the essential Sec protein translocation apparatus which comprises SecA, SecYEG and auxiliary proteins SecDF. Other proteins may also be involved.

Its subcellular location is the cell inner membrane. Part of the Sec protein translocase complex. Interacts with the SecYEG preprotein conducting channel. SecDF uses the proton motive force (PMF) to complete protein translocation after the ATP-dependent function of SecA. The sequence is that of Protein translocase subunit SecF from Treponema pallidum (strain Nichols).